The sequence spans 486 residues: MMTVSATAEGPAGTKAATGRVVRVIGPVVDAEFPRDAMPDLFNAMHVDVTLSGGEKTLTLEVAQHLGDNLVRAISMQPTDGLVRGVEVRDTGSPITVPVGDTVKGHVFNAIGECLNLEPGETLSPDDHWQIHRKAPAFADLEPKTEMLETGIKVIDLLAPYVKGGKIGLFGGAGVGKTVLIQEMITRVARNFGGTSVFAGVGERTREGNDLIAEMTESGVIDKTALVYGQMDEPPGTRLRVALSALTMAEYFRDVQKQEVLLFIDNIFRFTQAGSEVSTLLGRMPSAVGYQPTLADEMGELQERITSVRGQAITSLQAIYVPADDYTDPAPATTFAHLDATTNLERSISDKGIYPAVDPLASSSRILAPEFVGQEHFTVATEVKRILQRYKDLQDIIAILGIEELSEEDKLTVGRARRIERFLSQNTYAAEQFTGMKGSTVPIKETIDAFKKISEGEYDHFPEQAFFMCGGLEDLERKAKELMAEG.

Residue 171-178 (GGAGVGKT) participates in ATP binding.

It belongs to the ATPase alpha/beta chains family. As to quaternary structure, F-type ATPases have 2 components, CF(1) - the catalytic core - and CF(0) - the membrane proton channel. CF(1) has five subunits: alpha(3), beta(3), gamma(1), delta(1), epsilon(1). CF(0) has three main subunits: a(1), b(2) and c(9-12). The alpha and beta chains form an alternating ring which encloses part of the gamma chain. CF(1) is attached to CF(0) by a central stalk formed by the gamma and epsilon chains, while a peripheral stalk is formed by the delta and b chains.

It is found in the cell membrane. The enzyme catalyses ATP + H2O + 4 H(+)(in) = ADP + phosphate + 5 H(+)(out). In terms of biological role, produces ATP from ADP in the presence of a proton gradient across the membrane. The catalytic sites are hosted primarily by the beta subunits. This chain is ATP synthase subunit beta, found in Salinispora tropica (strain ATCC BAA-916 / DSM 44818 / JCM 13857 / NBRC 105044 / CNB-440).